Consider the following 232-residue polypeptide: Small ribosomal subunit protein uS3 (232 aa).

Residues 39–107 form the KH type-2 domain; it reads VRQYLTKELK…PAQINIAEVR (69 aa).

Belongs to the universal ribosomal protein uS3 family. Part of the 30S ribosomal subunit. Forms a tight complex with proteins S10 and S14.

In terms of biological role, binds the lower part of the 30S subunit head. Binds mRNA in the 70S ribosome, positioning it for translation. This Aliivibrio salmonicida (strain LFI1238) (Vibrio salmonicida (strain LFI1238)) protein is Small ribosomal subunit protein uS3.